Reading from the N-terminus, the 425-residue chain is Serine hydroxymethyltransferase (425 aa).

Residue 132–134 (GHL) coordinates (6S)-5,6,7,8-tetrahydrofolate. K237 is subject to N6-(pyridoxal phosphate)lysine.

This sequence belongs to the SHMT family. As to quaternary structure, homodimer. The cofactor is pyridoxal 5'-phosphate.

It is found in the cytoplasm. It carries out the reaction (6R)-5,10-methylene-5,6,7,8-tetrahydrofolate + glycine + H2O = (6S)-5,6,7,8-tetrahydrofolate + L-serine. Its pathway is one-carbon metabolism; tetrahydrofolate interconversion. It functions in the pathway amino-acid biosynthesis; glycine biosynthesis; glycine from L-serine: step 1/1. Functionally, catalyzes the reversible interconversion of serine and glycine with tetrahydrofolate (THF) serving as the one-carbon carrier. This reaction serves as the major source of one-carbon groups required for the biosynthesis of purines, thymidylate, methionine, and other important biomolecules. Also exhibits THF-independent aldolase activity toward beta-hydroxyamino acids, producing glycine and aldehydes, via a retro-aldol mechanism. The chain is Serine hydroxymethyltransferase from Wolbachia sp. subsp. Brugia malayi (strain TRS).